A 142-amino-acid chain; its full sequence is Histone H2B (142 aa).

The span at 1–10 shows a compositional bias: basic and acidic residues; sequence MPPKPAEKKP. Positions 1–50 are disordered; the sequence is MPPKPAEKKPSSTAGKAPASSAGKAPAEAAKKTSKAPAKSGEKKKATKVR. 2 positions are modified to N6-acetyllysine; alternate: lysine 8 and lysine 9. Glycyl lysine isopeptide (Lys-Gly) (interchain with G-Cter in SUMO); alternate cross-links involve residues lysine 8 and lysine 9. The span at 11 to 28 shows a compositional bias: low complexity; it reads SSTAGKAPASSAGKAPAE. Position 24 is an N6-acetyllysine (lysine 24). Residues 40–50 show a composition bias toward basic and acidic residues; that stretch reads SGEKKKATKVR. Lysine 137 is covalently cross-linked (Glycyl lysine isopeptide (Lys-Gly) (interchain with G-Cter in ubiquitin)).

This sequence belongs to the histone H2B family. As to quaternary structure, the nucleosome is a histone octamer containing two molecules each of H2A, H2B, H3 and H4 assembled in one H3-H4 heterotetramer and two H2A-H2B heterodimers. The octamer wraps approximately 147 bp of DNA. In terms of processing, monoubiquitinated by the UBC2-BRE1 complex to form H2BK123ub1. H2BK123ub1 gives a specific tag for epigenetic transcriptional activation and is also prerequisite for H3K4me and H3K79me formation. H2BK123ub1 also modulates the formation of double-strand breaks during meiosis and is a prerequisite for DNA-damage checkpoint activation. Post-translationally, acetylation of N-terminal lysines and particularly formation of H2BK11ac has a positive effect on transcription. Sumoylation to form H2BK6su or H2BK7su occurs preferentially near the telomeres and represses gene transcription.

The protein resides in the nucleus. It localises to the chromosome. Functionally, core component of nucleosome. Nucleosomes wrap and compact DNA into chromatin, limiting DNA accessibility to the cellular machineries which require DNA as a template. Histones thereby play a central role in transcription regulation, DNA repair, DNA replication and chromosomal stability. DNA accessibility is regulated via a complex set of post-translational modifications of histones, also called histone code, and nucleosome remodeling. The sequence is that of Histone H2B (HTB1) from Mycosarcoma maydis (Corn smut fungus).